The following is a 345-amino-acid chain: Photosystem II protein D1 (345 aa).

The next 3 membrane-spanning stretches (helical) occupy residues 30-47 (YVGWFGVLMIPTLLTAAT), 119-134 (HFFIGICSYMGREWEL), and 143-157 (WIAVAYSAPVAAASA). Residue His-119 coordinates chlorophyll a. Tyr-127 is a pheophytin a binding site. [CaMn4O5] cluster contacts are provided by Asp-171 and Glu-190. Residues 198 to 219 (FHMLGVAGVFGGSLFSAMHGSL) form a helical membrane-spanning segment. A chlorophyll a-binding site is contributed by His-199. A quinone is bound by residues His-216 and 265–266 (SF). His-216 contributes to the Fe cation binding site. Position 273 (His-273) interacts with Fe cation. Residues 275 to 289 (FLAVWPVVGIWFTAL) form a helical membrane-spanning segment. His-333, Glu-334, Asp-343, and Ala-345 together coordinate [CaMn4O5] cluster.

The protein belongs to the reaction center PufL/M/PsbA/D family. In terms of assembly, PSII is composed of 1 copy each of membrane proteins PsbA, PsbB, PsbC, PsbD, PsbE, PsbF, PsbH, PsbI, PsbJ, PsbK, PsbL, PsbM, PsbT, PsbY, PsbZ, Psb30/Ycf12, at least 3 peripheral proteins of the oxygen-evolving complex and a large number of cofactors. It forms dimeric complexes. The D1/D2 heterodimer binds P680, chlorophylls that are the primary electron donor of PSII, and subsequent electron acceptors. It shares a non-heme iron and each subunit binds pheophytin, quinone, additional chlorophylls, carotenoids and lipids. D1 provides most of the ligands for the Mn4-Ca-O5 cluster of the oxygen-evolving complex (OEC). There is also a Cl(-1) ion associated with D1 and D2, which is required for oxygen evolution. The PSII complex binds additional chlorophylls, carotenoids and specific lipids. serves as cofactor. Tyr-162 forms a radical intermediate that is referred to as redox-active TyrZ, YZ or Y-Z.

It localises to the plastid. The protein resides in the chloroplast thylakoid membrane. It catalyses the reaction 2 a plastoquinone + 4 hnu + 2 H2O = 2 a plastoquinol + O2. Photosystem II (PSII) is a light-driven water:plastoquinone oxidoreductase that uses light energy to abstract electrons from H(2)O, generating O(2) and a proton gradient subsequently used for ATP formation. It consists of a core antenna complex that captures photons, and an electron transfer chain that converts photonic excitation into a charge separation. The D1/D2 (PsbA/PsbD) reaction center heterodimer binds P680, the primary electron donor of PSII as well as several subsequent electron acceptors. The chain is Photosystem II protein D1 from Euglena gracilis.